The chain runs to 144 residues: D-aminoacyl-tRNA deacylase (144 aa).

The short motif at 136-137 is the Gly-cisPro motif, important for rejection of L-amino acids element; that stretch reads GP.

Belongs to the DTD family. Homodimer.

The protein resides in the cytoplasm. The catalysed reaction is glycyl-tRNA(Ala) + H2O = tRNA(Ala) + glycine + H(+). The enzyme catalyses a D-aminoacyl-tRNA + H2O = a tRNA + a D-alpha-amino acid + H(+). In terms of biological role, an aminoacyl-tRNA editing enzyme that deacylates mischarged D-aminoacyl-tRNAs. Also deacylates mischarged glycyl-tRNA(Ala), protecting cells against glycine mischarging by AlaRS. Acts via tRNA-based rather than protein-based catalysis; rejects L-amino acids rather than detecting D-amino acids in the active site. By recycling D-aminoacyl-tRNA to D-amino acids and free tRNA molecules, this enzyme counteracts the toxicity associated with the formation of D-aminoacyl-tRNA entities in vivo and helps enforce protein L-homochirality. This Haemophilus influenzae (strain PittGG) protein is D-aminoacyl-tRNA deacylase.